A 391-amino-acid chain; its full sequence is Ammonium transporter Amt1 (391 aa).

10 helical membrane passes run 12 to 32 (VFFF…FIAL), 51 to 71 (LDLA…SYGF), 88 to 108 (AWWM…TGGV), 112 to 132 (IKIL…YPIV), 152 to 172 (AGSG…AYVL), 192 to 212 (IPIA…FNIG), 223 to 243 (LASV…GGAL), 261 to 281 (VAVC…VGLL), 305 to 325 (IGPV…IPFL), and 338 to 358 (GQII…LIIY).

This sequence belongs to the ammonia transporter channel (TC 1.A.11.2) family. As to quaternary structure, homotrimer. Interacts and forms a complex with GlnK1.

Its subcellular location is the cell membrane. Its activity is regulated as follows. Activity is regulated by the nitrogen regulatory protein GlnK1 via direct interaction. Formation of the GlnK1/Amt1 complex is decreased in the presence of Mg-ATP or 2-oxoglutarate. The presence of both effectors abolishes the formation of the complex. In terms of biological role, involved in the uptake of ammonium/ammonia (NH(4)(+)/NH(3)). Transport is electrogenic. This chain is Ammonium transporter Amt1, found in Methanocaldococcus jannaschii (strain ATCC 43067 / DSM 2661 / JAL-1 / JCM 10045 / NBRC 100440) (Methanococcus jannaschii).